A 252-amino-acid polypeptide reads, in one-letter code: C-X-C motif chemokine 16 (252 aa).

The signal sequence occupies residues 1–25; sequence MMLGRTSRLLLVLLFIAYATTSGNG. At 26-198 the chain is on the extracellular side; it reads NEGSKVGSCP…RGPQAGTSAT (173 aa). Cystine bridges form between Cys-34/Cys-64 and Cys-36/Cys-78. 2 disordered regions span residues 115-145 and 163-195; these read LPEPTEAAPSDTATTSQTYLPSTLQRTQQPT and TTTYTSGHSLGAEPEAKENQKQLKENRGPQAGT. The span at 125–145 shows a compositional bias: polar residues; the sequence is DTATTSQTYLPSTLQRTQQPT. Residues 176–189 show a composition bias toward basic and acidic residues; that stretch reads PEAKENQKQLKENR. Residues 199–219 form a helical membrane-spanning segment; sequence VPVLSLLAIVFILAGVLLYVV. Topologically, residues 220–252 are cytoplasmic; the sequence is CKRRKNQLLQHPPDLAASLYTCSRRTRAENGTL.

It belongs to the intercrine alpha (chemokine CxC) family. Glycosylated.

The protein resides in the membrane. Induces a strong chemotactic response. Induces calcium mobilization. Binds to CXCR6/Bonzo. Also acts as a scavenger receptor on macrophages, which specifically binds to OxLDL (oxidized low density lipoprotein), suggesting that it may be involved in pathophysiology such as atherogenesis. The polypeptide is C-X-C motif chemokine 16 (CXCL16) (Bos taurus (Bovine)).